The primary structure comprises 421 residues: Gamma-glutamyl phosphate reductase (421 aa).

Belongs to the gamma-glutamyl phosphate reductase family.

Its subcellular location is the cytoplasm. The catalysed reaction is L-glutamate 5-semialdehyde + phosphate + NADP(+) = L-glutamyl 5-phosphate + NADPH + H(+). The protein operates within amino-acid biosynthesis; L-proline biosynthesis; L-glutamate 5-semialdehyde from L-glutamate: step 2/2. Catalyzes the NADPH-dependent reduction of L-glutamate 5-phosphate into L-glutamate 5-semialdehyde and phosphate. The product spontaneously undergoes cyclization to form 1-pyrroline-5-carboxylate. This chain is Gamma-glutamyl phosphate reductase, found in Brucella suis biovar 1 (strain 1330).